An 801-amino-acid polypeptide reads, in one-letter code: U-box domain-containing protein 34 (801 aa).

The segment at 205-309 (RSPTLPDPRQ…PETSRKSKKV (105 aa)) is disordered. The segment covering 236 to 254 (LTCNKPKTPQSSKASSATT) has biased composition (polar residues). Residues 289–309 (VSEHRDSDRSPPETSRKSKKV) are compositionally biased toward basic and acidic residues. Residues 301–395 (ETSRKSKKVE…ETAKALLARE (95 aa)) adopt a coiled-coil conformation. The Protein kinase domain maps to 442–705 (FSPEKVIGEG…DLKSEVIPVL (264 aa)). ATP is bound by residues 448–456 (IGEGGYGKV) and K469. D564 acts as the Proton acceptor in catalysis. The U-box domain occupies 724–797 (RAPSHYFCPI…RDWKSRVRFS (74 aa)).

The protein belongs to the protein kinase superfamily. Ser/Thr protein kinase family.

It carries out the reaction L-seryl-[protein] + ATP = O-phospho-L-seryl-[protein] + ADP + H(+). The enzyme catalyses L-threonyl-[protein] + ATP = O-phospho-L-threonyl-[protein] + ADP + H(+). It catalyses the reaction S-ubiquitinyl-[E2 ubiquitin-conjugating enzyme]-L-cysteine + [acceptor protein]-L-lysine = [E2 ubiquitin-conjugating enzyme]-L-cysteine + N(6)-ubiquitinyl-[acceptor protein]-L-lysine.. Its pathway is protein modification; protein ubiquitination. Functions as an E3 ubiquitin ligase. In Arabidopsis thaliana (Mouse-ear cress), this protein is U-box domain-containing protein 34 (PUB34).